The sequence spans 126 residues: Ribonuclease VapC23 (126 aa).

A PINc domain is found at 2-118 (IFVDTNVFMY…GVTRIKTFDH (117 aa)). The Mg(2+) site is built by Asp5 and Asp98.

Belongs to the PINc/VapC protein family. Mg(2+) serves as cofactor.

In terms of biological role, toxic component of a type II toxin-antitoxin (TA) system. An RNase. The cognate antitoxin is VapB23. This Mycobacterium tuberculosis (strain CDC 1551 / Oshkosh) protein is Ribonuclease VapC23.